The primary structure comprises 89 residues: Small ribosomal subunit protein uS14A (89 aa).

It belongs to the universal ribosomal protein uS14 family. As to quaternary structure, part of the 30S ribosomal subunit. Contacts proteins S3 and S10.

Its function is as follows. Binds 16S rRNA, required for the assembly of 30S particles and may also be responsible for determining the conformation of the 16S rRNA at the A site. The sequence is that of Small ribosomal subunit protein uS14A from Listeria monocytogenes serovar 1/2a (strain ATCC BAA-679 / EGD-e).